The chain runs to 430 residues: C-terminal-binding protein 1 (430 aa).

The interval 1-59 is interaction with GLIS2 1; it reads MSGVRPPIMNGPMHPRPLVALLDGRDCTVEMPILKDVATVAFCDAQSTQEIHEKVLNEA. Residues serine 89, 169-174, aspartate 193, 226-232, 253-255, and aspartate 279 contribute to the NAD(+) site; these read IGLGRV, CGLNEHN, and TAR. Arginine 255 is a catalytic residue. The interaction with GLIS2 2 stretch occupies residues 277 to 349; that stretch reads ALDVHESEPF…VNKDHLTAAT (73 aa). The active site involves glutamate 284. Serine 289 carries the post-translational modification Phosphoserine. Histidine 304 acts as the Proton donor in catalysis. The tract at residues 398–430 is disordered; the sequence is SHGLPPVAHPPHAPSPGQTVKPEADRDHTTDQL. Serine 412 is subject to Phosphoserine. Residue lysine 418 forms a Glycyl lysine isopeptide (Lys-Gly) (interchain with G-Cter in SUMO) linkage. The span at 419–430 shows a compositional bias: basic and acidic residues; it reads PEADRDHTTDQL.

It belongs to the D-isomer specific 2-hydroxyacid dehydrogenase family. Homo- or heterodimer. Heterodimer with CTBP2. Interacts with ELK3 (via its PXDLS motif). Interacts with RBBP8 (via its PXDLS motif); the interaction is disrupted by binding to adenovirus E1A. Interacts with PNN, MECOM and ZFHX1B. Interacts with ZNF366 (via PXDLS motif). Interaction with SATB1 (non-acetylated form); the interaction stabilizes its attachment to DNA and promotes transcription repression. Interacts with PRDM16; the interaction represses white adipose tissue (WAT)-specific genes expression. Interacts with GLIS2, HIPK2, FOXP1, FOXP2, HDAC4, HDAC5, HDAC9, NRIP1 and WIZ. Interacts with ZNF217. Interacts with BCL6; the interaction is required for BCL6 transcriptional autoinhibition and inhibition of some BCL6 target genes. Interacts with IKZF4. Interacts with MCRIP1 (unphosphorylated form, via the PXDLS motif); competitively inhibiting CTBP-ZEB1 interaction. Interacts with Bassoon/BSN; this interaction targets and anchors CTBP1 to presynapses. Interacts with SIMC1. NAD(+) serves as cofactor. In terms of processing, the level of phosphorylation appears to be regulated during the cell cycle. Phosphorylation by HIPK2 on Ser-412 induces proteasomal degradation. Post-translationally, ADP-ribosylated; when cells are exposed to brefeldin A. Sumoylation on Lys-418 is promoted by the E3 SUMO-protein ligase CBX4.

Its subcellular location is the cytoplasm. It localises to the nucleus. The protein resides in the synapse. The protein localises to the synaptosome. Its function is as follows. Corepressor targeting diverse transcription regulators such as GLIS2 or BCL6. Has dehydrogenase activity. Involved in controlling the equilibrium between tubular and stacked structures in the Golgi complex. Functions in brown adipose tissue (BAT) differentiation. The polypeptide is C-terminal-binding protein 1 (Ctbp1) (Rattus norvegicus (Rat)).